The following is a 293-amino-acid chain: Probable mediator of RNA polymerase II transcription subunit 15b (293 aa).

Belongs to the plant Mediator complex subunit 15 family. In terms of assembly, component of the Mediator complex.

It is found in the nucleus. In terms of biological role, component of the Mediator complex, a coactivator involved in the regulated transcription of nearly all RNA polymerase II-dependent genes. Mediator functions as a bridge to convey information from gene-specific regulatory proteins to the basal RNA polymerase II transcription machinery. The Mediator complex, having a compact conformation in its free form, is recruited to promoters by direct interactions with regulatory proteins and serves for the assembly of a functional preinitiation complex with RNA polymerase II and the general transcription factors. In Arabidopsis thaliana (Mouse-ear cress), this protein is Probable mediator of RNA polymerase II transcription subunit 15b (MED15B).